The primary structure comprises 364 residues: N-alpha-acetyltransferase 30 (364 aa).

Over residues 1–18 (MAEVPPGPSSLLPPPAPA) the composition is skewed to pro residues. Disordered regions lie at residues 1 to 21 (MAEV…AAPA), 39 to 65 (SEDE…TSAK), and 110 to 164 (EAAA…SDPA). Phosphoserine is present on residues Ser39 and Ser54. Over residues 39–48 (SEDEEDDEEH) the composition is skewed to acidic residues. Over residues 126 to 135 (AEGHPGERPP) the composition is skewed to basic and acidic residues. Residues 152–164 (AAAAAAGAASDPA) are compositionally biased toward low complexity. Ser192, Ser198, and Ser201 each carry phosphoserine. An N-acetyltransferase domain is found at 216–364 (RYVRYESELQ…DALRLKLWLR (149 aa)). Lys235 is modified (N6-acetyllysine).

This sequence belongs to the acetyltransferase family. MAK3 subfamily. Component of the N-terminal acetyltransferase C (NatC) complex, which is composed of NAA35, NAA38 and NAA30.

It localises to the cytoplasm. It is found in the nucleus. The enzyme catalyses N-terminal L-methionyl-L-leucyl-[protein] + acetyl-CoA = N-terminal N(alpha)-acetyl-L-methionyl-L-leucyl-[protein] + CoA + H(+). It carries out the reaction N-terminal L-methionyl-L-isoleucyl-[protein] + acetyl-CoA = N-terminal N(alpha)-acetyl-L-methionyl-L-isoleucyl-[protein] + CoA + H(+). The catalysed reaction is N-terminal L-methionyl-L-phenylalanyl-[protein] + acetyl-CoA = N-terminal N(alpha)-acetyl-L-methionyl-L-phenylalanyl-[protein] + CoA + H(+). It catalyses the reaction N-terminal L-methionyl-L-tryptophyl-[protein] + acetyl-CoA = N-terminal N(alpha)-acetyl-L-methionyl-L-tryptophyl-[protein] + CoA + H(+). The enzyme catalyses N-terminal L-methionyl-L-tyrosyl-[protein] + acetyl-CoA = N-terminal N(alpha)-acetyl-L-methionyl-L-tyrosyl-[protein] + CoA + H(+). Functionally, catalytic subunit of the N-terminal acetyltransferase C (NatC) complex. Catalyzes acetylation of the N-terminal methionine residues of peptides beginning with Met-Leu-Ala and Met-Leu-Gly. N-terminal acetylation protects proteins from ubiquitination and degradation by the N-end rule pathway. Necessary for the lysosomal localization and function of ARL8B sugeesting that ARL8B is a NatC substrate. The protein is N-alpha-acetyltransferase 30 (Naa30) of Mus musculus (Mouse).